A 224-amino-acid polypeptide reads, in one-letter code: Cell division protein SepF (224 aa).

The tract at residues 21-78 (DDYYEDDDRGPAPRGYRRPREDRFEDEGYAPRGYDGHPEDRRRDYDEPPAYRAGLAGG) is disordered. A compositionally biased stretch (basic and acidic residues) spans 54-66 (YDGHPEDRRRDYD).

Belongs to the SepF family. Homodimer. Interacts with FtsZ.

It is found in the cytoplasm. Its function is as follows. Cell division protein that is part of the divisome complex and is recruited early to the Z-ring. Probably stimulates Z-ring formation, perhaps through the cross-linking of FtsZ protofilaments. Its function overlaps with FtsA. This Mycolicibacterium gilvum (strain PYR-GCK) (Mycobacterium gilvum (strain PYR-GCK)) protein is Cell division protein SepF.